The following is a 991-amino-acid chain: Glutamate receptor 1 (991 aa).

A signal peptide spans 1 to 27 (MHSRLKFLAYLHFICASSIFWPEFSSA). The Extracellular segment spans residues 28-611 (QQQQQTVSLT…VFSFLNPLSQ (584 aa)). N67, N195, N208, and N281 each carry an N-linked (GlcNAc...) asparagine glycan. Disordered regions lie at residues 300 to 321 (DSRK…GPNS) and 354 to 379 (FRSN…NESS). Residues 308–318 (SGQSQSQNAGG) are compositionally biased toward polar residues. Residues 365 to 379 (GGSSSSSATGTNESS) show a composition bias toward low complexity. N376, N385, N426, N437, and N477 each carry an N-linked (GlcNAc...) asparagine glycan. A helical transmembrane segment spans residues 612–632 (EIWISVILSYVGVSFVLYFVT). At 633-710 (RFPPYEWRIV…PSIAGRIAAA (78 aa)) the chain is on the cytoplasmic side. A helical transmembrane segment spans residues 711 to 731 (VWWFFTIILISSYTANLAAFL). Residues 732–895 (TVERMVAPIK…STPNELSLSN (164 aa)) are Extracellular-facing. Residues 896–916 (VAGIYYILIGGLLLAVIVAIM) traverse the membrane as a helical segment. The Cytoplasmic segment spans residues 917–991 (EFFCRNKTPQ…ASNVRYQYSM (75 aa)).

Belongs to the glutamate-gated ion channel (TC 1.A.10.1) family. Homooligomer. In terms of tissue distribution, central nervous system.

It localises to the cell membrane. The protein localises to the postsynaptic cell membrane. In terms of biological role, receptor for glutamate. L-glutamate acts as an excitatory neurotransmitter at many synapses in the central nervous system. The postsynaptic actions of Glu are mediated by a variety of receptors that are named according to their selective agonists. Forms ligand-gated ion channels which are activated by kainate. The chain is Glutamate receptor 1 (GluRIA) from Drosophila melanogaster (Fruit fly).